The primary structure comprises 198 residues: Holliday junction branch migration complex subunit RuvA (198 aa).

The tract at residues 1–63 (MYDYIKGQLT…EDAHLLFGFH (63 aa)) is domain I. Positions 64–142 (TEDEKDVFLK…EAPQETGHTK (79 aa)) are domain II. The tract at residues 143–147 (ARSNK) is flexible linker. Residues 148 to 198 (AGNTQLDEAIEALLALGYTATELKKIRAFFEGTSETAEQYIKSALKLLMKG) form a domain III region.

This sequence belongs to the RuvA family. In terms of assembly, homotetramer. Forms an RuvA(8)-RuvB(12)-Holliday junction (HJ) complex. HJ DNA is sandwiched between 2 RuvA tetramers; dsDNA enters through RuvA and exits via RuvB. An RuvB hexamer assembles on each DNA strand where it exits the tetramer. Each RuvB hexamer is contacted by two RuvA subunits (via domain III) on 2 adjacent RuvB subunits; this complex drives branch migration. In the full resolvosome a probable DNA-RuvA(4)-RuvB(12)-RuvC(2) complex forms which resolves the HJ.

The protein resides in the cytoplasm. The RuvA-RuvB-RuvC complex processes Holliday junction (HJ) DNA during genetic recombination and DNA repair, while the RuvA-RuvB complex plays an important role in the rescue of blocked DNA replication forks via replication fork reversal (RFR). RuvA specifically binds to HJ cruciform DNA, conferring on it an open structure. The RuvB hexamer acts as an ATP-dependent pump, pulling dsDNA into and through the RuvAB complex. HJ branch migration allows RuvC to scan DNA until it finds its consensus sequence, where it cleaves and resolves the cruciform DNA. The protein is Holliday junction branch migration complex subunit RuvA of Streptococcus pyogenes serotype M49 (strain NZ131).